The chain runs to 199 residues: Holliday junction branch migration complex subunit RuvA (199 aa).

The segment at 1 to 64 (MIARLTGMLA…EDAISLFGFR (64 aa)) is domain I. The interval 65–143 (TVAEKEFFQV…KMDVAPSTKE (79 aa)) is domain II. The segment at 144–154 (AAPSEAPPEVA) is flexible linker. Residues 154–199 (ADDVASALVNLGYKEAVVRKVLAEMAIESGASTEAVLRQALKILMK) are domain III.

This sequence belongs to the RuvA family. In terms of assembly, homotetramer. Forms an RuvA(8)-RuvB(12)-Holliday junction (HJ) complex. HJ DNA is sandwiched between 2 RuvA tetramers; dsDNA enters through RuvA and exits via RuvB. An RuvB hexamer assembles on each DNA strand where it exits the tetramer. Each RuvB hexamer is contacted by two RuvA subunits (via domain III) on 2 adjacent RuvB subunits; this complex drives branch migration. In the full resolvosome a probable DNA-RuvA(4)-RuvB(12)-RuvC(2) complex forms which resolves the HJ.

It localises to the cytoplasm. Its function is as follows. The RuvA-RuvB-RuvC complex processes Holliday junction (HJ) DNA during genetic recombination and DNA repair, while the RuvA-RuvB complex plays an important role in the rescue of blocked DNA replication forks via replication fork reversal (RFR). RuvA specifically binds to HJ cruciform DNA, conferring on it an open structure. The RuvB hexamer acts as an ATP-dependent pump, pulling dsDNA into and through the RuvAB complex. HJ branch migration allows RuvC to scan DNA until it finds its consensus sequence, where it cleaves and resolves the cruciform DNA. This is Holliday junction branch migration complex subunit RuvA from Geobacter metallireducens (strain ATCC 53774 / DSM 7210 / GS-15).